A 608-amino-acid polypeptide reads, in one-letter code: Protein FAM151A (608 aa).

A helical transmembrane segment spans residues 14–34 (WILAGSVSMTLVLAISMILGL). Residues 588–608 (RHRPSSRTGPSYVEGFPGESR) are disordered.

Belongs to the menorin family.

It localises to the membrane. The polypeptide is Protein FAM151A (Fam151a) (Rattus norvegicus (Rat)).